A 550-amino-acid polypeptide reads, in one-letter code: Cochlin (550 aa).

The first 24 residues, 1–24 (MWASWIPVLCLGVCLLLPPEPVGS), serve as a signal peptide directing secretion. The 94-residue stretch at 28–121 (VPIPITCSTR…QMLSRWSASF (94 aa)) folds into the LCCL domain. Cystine bridges form between cysteine 34/cysteine 50 and cysteine 54/cysteine 74. Asparagine 100 carries an N-linked (GlcNAc...) asparagine glycan. Positions 128–139 (SGTQEATGQAVS) are enriched in polar residues. Residues 128–158 (SGTQEATGQAVSTAHPATGKRLKKTPEKKTG) form a disordered region. 2 VWFA domains span residues 165 to 350 (DIAF…VQKL) and 367 to 537 (NIAF…VSDV). N-linked (GlcNAc...) asparagine glycosylation is found at asparagine 221 and asparagine 436.

As to quaternary structure, monomer. May form homodimer. Interacts with type II collagen. Interacts with SLC44A2. Interacts with ANXA2. In terms of processing, N-glycosylated.

It localises to the secreted. The protein resides in the extracellular space. Its function is as follows. Plays a role in the control of cell shape and motility in the trabecular meshwork. This is Cochlin (COCH) from Bos taurus (Bovine).